The sequence spans 357 residues: Prostaglandin D2 receptor-like (357 aa).

At 1–20 (MNESYRCQAATWVERGSSAT) the chain is on the extracellular side. Asparagine 2 carries an N-linked (GlcNAc...) asparagine glycan. The chain crosses the membrane as a helical span at residues 21 to 41 (MGGVLFSAGLLGNLLALVLLA). The Cytoplasmic segment spans residues 42 to 57 (RSGLGSCRPGPLHPPP). A helical membrane pass occupies residues 58-78 (SVFYVLVCGLTVTHLLGKCLI). The Extracellular segment spans residues 79 to 106 (SPMVLAAYAQNRSLKELLPASGNQLCEA). An N-linked (GlcNAc...) asparagine glycan is attached at asparagine 89. An intrachain disulfide couples cysteine 104 to cysteine 182. The chain crosses the membrane as a helical span at residues 107–127 (FAFLMSFFGLASTLQLLAMAL). Topologically, residues 128-149 (ECWLSLGHPFFYQRHITARRGV) are cytoplasmic. The chain crosses the membrane as a helical span at residues 150–170 (LVAPVAGAFSLAFCALPFAGF). Residues 171 to 194 (GKFVQYCPGTWCFIQMIHKKRSFS) are Extracellular-facing. The helical transmembrane segment at 195–215 (VIGFSVLYSSLMALLVLATVV) threads the bilayer. Over 216–261 (CNLGAMSNLYAMHRRQRHHPRRCSRDRAQSGSDYRHGSPNPLEELD) the chain is Cytoplasmic. The chain crosses the membrane as a helical span at residues 262-282 (HFVLLALTTVLFTMCSLPLIY). Over 283 to 306 (RAYYGAFKLVDRADGDSEDLQALR) the chain is Extracellular. The chain crosses the membrane as a helical span at residues 307-327 (FLSVISIVDPWIFIIFRTSVF). Topologically, residues 328–357 (RMLFHKAFTRPLIYRNWCSHSWQTNMESTL) are cytoplasmic.

This sequence belongs to the G-protein coupled receptor 1 family. In terms of tissue distribution, strongly expressed in eye and gastrointestinal tract (GIT), moderately in the brain and oviduct and weakly in the epididymis. In the eye, expressed in the epithelium of the iris and ciliary body and in photoreceptor cells of the retina. In the brain, expressed in leptomeninges, choroid plexus and spinal cord (sensory and motor neurons of the dorsal and ventral horns). In the stomach, expressed in the mucous-secreting goblet cells and the columnar epithelium. Expressed in platelets.

The protein localises to the cell membrane. In terms of biological role, receptor for prostaglandin D2 (PGD2). The activity of this receptor is mainly mediated by G(s) proteins that stimulate adenylate cyclase, resulting in an elevation of intracellular cAMP. A mobilization of calcium is also observed, but without formation of inositol 1,4,5-trisphosphate. This chain is Prostaglandin D2 receptor-like (Ptgdrl), found in Rattus norvegicus (Rat).